Consider the following 460-residue polypeptide: ATP synthase subunit beta (460 aa).

150–157 (GGAGVGKT) contacts ATP.

The protein belongs to the ATPase alpha/beta chains family. In terms of assembly, F-type ATPases have 2 components, CF(1) - the catalytic core - and CF(0) - the membrane proton channel. CF(1) has five subunits: alpha(3), beta(3), gamma(1), delta(1), epsilon(1). CF(0) has three main subunits: a(1), b(2) and c(9-12). The alpha and beta chains form an alternating ring which encloses part of the gamma chain. CF(1) is attached to CF(0) by a central stalk formed by the gamma and epsilon chains, while a peripheral stalk is formed by the delta and b chains.

Its subcellular location is the cell inner membrane. It catalyses the reaction ATP + H2O + 4 H(+)(in) = ADP + phosphate + 5 H(+)(out). In terms of biological role, produces ATP from ADP in the presence of a proton gradient across the membrane. The catalytic sites are hosted primarily by the beta subunits. The chain is ATP synthase subunit beta from Klebsiella pneumoniae subsp. pneumoniae (strain ATCC 700721 / MGH 78578).